The chain runs to 436 residues: UPF0597 protein YhaM (436 aa).

The protein belongs to the UPF0597 family.

This is UPF0597 protein YhaM from Salmonella newport (strain SL254).